We begin with the raw amino-acid sequence, 210 residues long: Adenylate kinase isoenzyme 1 (210 aa).

Position 30 to 35 (30 to 35 (GSGKGT)) interacts with ATP. Positions 50–79 (SSGDLLRDEVKSGSPRGAQLTAIMESGALV) are NMP. AMP contacts are provided by residues S51, R56, 77–79 (ALV), 107–110 (GYPR), and Q114. Positions 144–154 (HRAQTSGRADD) are LID. ATP is bound at residue R145. R151 and R162 together coordinate AMP. Residue G190 participates in ATP binding.

This sequence belongs to the adenylate kinase family. AK1 subfamily. Monomer.

Its subcellular location is the cytoplasm. It carries out the reaction AMP + ATP = 2 ADP. Catalyzes the reversible transfer of the terminal phosphate group between ATP and AMP. Plays an important role in cellular energy homeostasis and in adenine nucleotide metabolism. In Caenorhabditis elegans, this protein is Adenylate kinase isoenzyme 1.